We begin with the raw amino-acid sequence, 197 residues long: Guanylate kinase (197 aa).

Residues 1-30 (MAATPRGTSPVPPDARPRLTVLSGPSGVGK) are disordered. The region spanning 17 to 197 (PRLTVLSGPS…RELLALTNVV (181 aa)) is the Guanylate kinase-like domain. ATP is bound at residue 24-31 (GPSGVGKS).

The protein belongs to the guanylate kinase family.

The protein localises to the cytoplasm. The catalysed reaction is GMP + ATP = GDP + ADP. Essential for recycling GMP and indirectly, cGMP. This chain is Guanylate kinase (gmk), found in Streptomyces coelicolor (strain ATCC BAA-471 / A3(2) / M145).